A 214-amino-acid polypeptide reads, in one-letter code: Thiopurine S-methyltransferase (214 aa).

S-adenosyl-L-methionine contacts are provided by Trp-10, Leu-44, Glu-65, and Arg-122.

It belongs to the class I-like SAM-binding methyltransferase superfamily. TPMT family.

It is found in the cytoplasm. The enzyme catalyses S-adenosyl-L-methionine + a thiopurine = S-adenosyl-L-homocysteine + a thiopurine S-methylether.. The chain is Thiopurine S-methyltransferase from Teredinibacter turnerae (strain ATCC 39867 / T7901).